Here is a 500-residue protein sequence, read N- to C-terminus: Lysine--tRNA ligase (500 aa).

Glu-402 and Glu-409 together coordinate Mg(2+).

Belongs to the class-II aminoacyl-tRNA synthetase family. In terms of assembly, homodimer. The cofactor is Mg(2+).

The protein localises to the cytoplasm. It carries out the reaction tRNA(Lys) + L-lysine + ATP = L-lysyl-tRNA(Lys) + AMP + diphosphate. The chain is Lysine--tRNA ligase from Buchnera aphidicola subsp. Baizongia pistaciae (strain Bp).